The primary structure comprises 209 residues: Pyroglutamyl-peptidase 1 (209 aa).

Catalysis depends on residues E85, C149, and H168.

The protein belongs to the peptidase C15 family. In terms of assembly, monomer.

It is found in the cytoplasm. The enzyme catalyses Release of an N-terminal pyroglutamyl group from a polypeptide, the second amino acid generally not being Pro.. Functionally, removes 5-oxoproline from various penultimate amino acid residues except L-proline. In Mus musculus (Mouse), this protein is Pyroglutamyl-peptidase 1 (Pgpep1).